Here is a 107-residue protein sequence, read N- to C-terminus: UPF0473 protein Ldb1604 (107 aa).

It belongs to the UPF0473 family.

The sequence is that of UPF0473 protein Ldb1604 from Lactobacillus delbrueckii subsp. bulgaricus (strain ATCC 11842 / DSM 20081 / BCRC 10696 / JCM 1002 / NBRC 13953 / NCIMB 11778 / NCTC 12712 / WDCM 00102 / Lb 14).